A 420-amino-acid chain; its full sequence is Septin-8-A (420 aa).

The Septin-type G domain occupies Gln-39–Glu-305. The G1 motif stretch occupies residues Gly-49–Ser-56. GTP contacts are provided by residues Gly-49–Ser-56, Gly-104, Lys-185–Glu-193, Gly-239, and Arg-254. Positions Asp-101–Gly-104 are G3 motif. The G4 motif stretch occupies residues Ala-184 to Asp-187. A coiled-coil region spans residues Gln-321–Ser-407. The disordered stretch occupies residues Met-393–Asn-420.

This sequence belongs to the TRAFAC class TrmE-Era-EngA-EngB-Septin-like GTPase superfamily. Septin GTPase family.

This chain is Septin-8-A (sept8a), found in Danio rerio (Zebrafish).